Here is a 338-residue protein sequence, read N- to C-terminus: MLTERQLLILQTIIDDFIGSAQPVGSRTLAKKDAITFSSATIRNEMADLEELGFIEKTHSSSGRVPSEKGYRFYVDHLLAPQNLPKDEIVQIKDLFAERIFEAEKIAQQSAQILSELTNYTAIVLGPKLSTNKLKNVQIVSLDRQTAVAIIVTDTGHVQSKTITVPESVDLSDLEKMVNILNEKLSGVPMSELHNKIFKEIVTVLRGYVHNYDSAIKMLDGTFQVPLSEKIYFGGKANMLSQPEFHDIHKVRSLLTMIDNEAEFYDILRHKQVGIQVKIGRENSATAMEDCSLISATYSIGEEQLGTIAILGPTRMQYSRVISLLQLFTRQFTDGLKK.

It belongs to the HrcA family.

Negative regulator of class I heat shock genes (grpE-dnaK-dnaJ and groELS operons). Prevents heat-shock induction of these operons. The sequence is that of Heat-inducible transcription repressor HrcA from Bacillus thuringiensis (strain Al Hakam).